The primary structure comprises 299 residues: Taste receptor type 2 member 45 (299 aa).

Position 1 (M1) is a topological domain, extracellular. The chain crosses the membrane as a helical span at residues 2-22 (ITFLPIIFSILVVVTFVIGNF). The Cytoplasmic segment spans residues 23 to 55 (ANGFIALVNSTEWVKRQKISFADQIVTALAVSR). A helical membrane pass occupies residues 56-76 (VGLLWVLLLNWYSTVLNPAFC). The Extracellular portion of the chain corresponds to 77-98 (SVELRTTAYNIWAVTGHFSNWP). The chain crosses the membrane as a helical span at residues 99–119 (ATSLSIFYLLKIANFSNLIFL). The Cytoplasmic segment spans residues 120-126 (RLKRRVK). The helical transmembrane segment at 127-147 (SVILVVLLGPLLFLACHLFVV) threads the bilayer. The Extracellular portion of the chain corresponds to 148-178 (NMNQIVWTKEYEGNMTWKIKLRRAMYLSDTT). N-linked (GlcNAc...) asparagine glycosylation is present at N161. Residues 179–199 (VTMLANLVPFTVTLISFLLLV) form a helical membrane-spanning segment. The Cytoplasmic portion of the chain corresponds to 200-229 (CSLCKHLKKMQLHGKGSQDPSTKVHIKVLQ). A helical transmembrane segment spans residues 230–250 (TVISFFLLRAIYFVSVIISVW). At 251–259 (SFKNLENKP) the chain is on the extracellular side. A helical transmembrane segment spans residues 260-280 (VFMFCQAIGFSCSSAHPFILI). Topologically, residues 281–299 (WGNKKLKQTYLSVLWQMRY) are cytoplasmic.

Belongs to the G-protein coupled receptor T2R family. In terms of tissue distribution, expressed in subsets of taste receptor cells of the tongue and exclusively in gustducin-positive cells.

It localises to the membrane. In terms of biological role, receptor that may play a role in the perception of bitterness and is gustducin-linked. May play a role in sensing the chemical composition of the gastrointestinal content. The activity of this receptor may stimulate alpha gustducin, mediate PLC-beta-2 activation and lead to the gating of TRPM5. The protein is Taste receptor type 2 member 45 (TAS2R45) of Homo sapiens (Human).